Reading from the N-terminus, the 351-residue chain is UDP-N-acetylglucosamine transporter slc35b4 (351 aa).

The next 10 helical transmembrane spans lie at 6-26 (LISLIPISMIMVGCCSNVISL), 37-57 (AILVTFFQFATVAFISFFVNI), 77-97 (IPLKTYFLMVSIFFILSVLNN), 104-124 (IPIPFHMIFRSSSLLSTIVIG), 136-156 (QILSLIMVTLGIIFATFSSMP), 173-193 (FSIGMLMLIAAMFLSSILGLI), 209-229 (TIFYSHLFSLPFFLLFKDDIL), 252-274 (TLWVYLIVNVLTQYVCIQGVFIL), 282-302 (TCTLVISIRKFLSIIISVIYF), and 306-326 (FTSLLFTGTILVFLGTFMYST).

This sequence belongs to the nucleotide-sugar transporter family. SLC35B subfamily.

It localises to the golgi apparatus membrane. In terms of biological role, sugar transporter that specifically mediates the transport of UDP-N-acetylglucosamine (UDP-GlcNAc) from cytosol into Golgi. The chain is UDP-N-acetylglucosamine transporter slc35b4 (slc35b4) from Dictyostelium discoideum (Social amoeba).